The chain runs to 66 residues: MRSLYLSFSLTIIFVLVIMHAEAKAISEPNAIAEADPRFLNILKTIGKILLPIIPTVAEKIKEKVG.

The signal sequence occupies residues 1-25; it reads MRSLYLSFSLTIIFVLVIMHAEAKA. Residues 26–37 constitute a propeptide that is removed on maturation; sequence ISEPNAIAEADP. Valine 65 is modified (valine amide).

Belongs to the formicidae venom clade 3 family. As to expression, expressed by the venom gland.

It localises to the secreted. Its function is as follows. Toxin that causes a rapid and irreversible paralysis when intrathoracically injected into insects (blowflies). Does not cause spontaneous nocifensive behaviors by intraplantar injection in mice. Exhibits hemolytic and cytotoxic activities on HEK293 cells. The sequence is that of Myrmicitoxin(1)-Pr5a from Pogonomyrmex rugosus (Desert harvester ant).